The following is an 861-amino-acid chain: FO synthase (861 aa).

Radical SAM core domains lie at 69-319 (ITYS…LQAP) and 528-763 (VTYI…LLHP). Positions 70–401 (TYSKSVFIPL…PRLLPHVRAL (332 aa)) are cofG-like. Residues Cys83, Cys87, Cys90, Cys542, Cys546, and Cys549 each coordinate [4Fe-4S] cluster. The tract at residues 505 to 838 (DGPALDALTR…KPRTTLYGEV (334 aa)) is cofH-like.

In the N-terminal section; belongs to the radical SAM superfamily. CofG family. This sequence in the C-terminal section; belongs to the radical SAM superfamily. CofH family. Requires [4Fe-4S] cluster as cofactor.

It catalyses the reaction 5-amino-6-(D-ribitylamino)uracil + L-tyrosine + S-adenosyl-L-methionine = 5-amino-5-(4-hydroxybenzyl)-6-(D-ribitylimino)-5,6-dihydrouracil + 2-iminoacetate + 5'-deoxyadenosine + L-methionine + H(+). It carries out the reaction 5-amino-5-(4-hydroxybenzyl)-6-(D-ribitylimino)-5,6-dihydrouracil + S-adenosyl-L-methionine = 7,8-didemethyl-8-hydroxy-5-deazariboflavin + 5'-deoxyadenosine + L-methionine + NH4(+) + H(+). It functions in the pathway cofactor biosynthesis; coenzyme F0 biosynthesis. Its function is as follows. Catalyzes the radical-mediated synthesis of 7,8-didemethyl-8-hydroxy-5-deazariboflavin (FO) from 5-amino-6-(D-ribitylamino)uracil and L-tyrosine. The sequence is that of FO synthase (fbiC) from Streptomyces avermitilis (strain ATCC 31267 / DSM 46492 / JCM 5070 / NBRC 14893 / NCIMB 12804 / NRRL 8165 / MA-4680).